A 131-amino-acid polypeptide reads, in one-letter code: MLIRPNKVQKVGNLFMDTVHEEEIRLLNQLYDTLMKKDVEKADQLMDELLVDLEDHFTTEEELMREFEFFAYPMHKAEHDTMRKRFKEVYDKWKKEKNPEEVVRFLKEEFVPWLKSHVARWDSTTAQQLGD.

8 residues coordinate Fe cation: histidine 20, glutamate 23, histidine 56, glutamate 60, histidine 75, histidine 79, histidine 117, and aspartate 122.

Belongs to the hemerythrin family. Monomer.

In terms of biological role, oxygen-binding protein. May be involved in a storage mechanism or for delivery to oxygen-requiring enzymes. The oxygen-binding site contains two iron atoms. This chain is Bacteriohemerythrin, found in Aquifex aeolicus (strain VF5).